A 433-amino-acid polypeptide reads, in one-letter code: Enolase (433 aa).

A (2R)-2-phosphoglycerate-binding site is contributed by Gln167. The Proton donor role is filled by Glu209. The Mg(2+) site is built by Asp246, Glu291, and Asp318. (2R)-2-phosphoglycerate contacts are provided by Lys343, Arg372, Ser373, and Lys394. The Proton acceptor role is filled by Lys343.

It belongs to the enolase family. As to quaternary structure, component of the RNA degradosome, a multiprotein complex involved in RNA processing and mRNA degradation. Mg(2+) serves as cofactor.

It localises to the cytoplasm. The protein resides in the secreted. The protein localises to the cell surface. It catalyses the reaction (2R)-2-phosphoglycerate = phosphoenolpyruvate + H2O. It functions in the pathway carbohydrate degradation; glycolysis; pyruvate from D-glyceraldehyde 3-phosphate: step 4/5. In terms of biological role, catalyzes the reversible conversion of 2-phosphoglycerate (2-PG) into phosphoenolpyruvate (PEP). It is essential for the degradation of carbohydrates via glycolysis. The polypeptide is Enolase (Photobacterium profundum (strain SS9)).